The primary structure comprises 123 residues: Phosphoribosyl-AMP cyclohydrolase (123 aa).

Aspartate 73 lines the Mg(2+) pocket. Cysteine 74 serves as a coordination point for Zn(2+). Mg(2+) contacts are provided by aspartate 75 and aspartate 77. Residues cysteine 90 and cysteine 97 each contribute to the Zn(2+) site.

The protein belongs to the PRA-CH family. In terms of assembly, homodimer. Mg(2+) is required as a cofactor. It depends on Zn(2+) as a cofactor.

The protein localises to the cytoplasm. The catalysed reaction is 1-(5-phospho-beta-D-ribosyl)-5'-AMP + H2O = 1-(5-phospho-beta-D-ribosyl)-5-[(5-phospho-beta-D-ribosylamino)methylideneamino]imidazole-4-carboxamide. The protein operates within amino-acid biosynthesis; L-histidine biosynthesis; L-histidine from 5-phospho-alpha-D-ribose 1-diphosphate: step 3/9. Catalyzes the hydrolysis of the adenine ring of phosphoribosyl-AMP. This chain is Phosphoribosyl-AMP cyclohydrolase, found in Methanoregula boonei (strain DSM 21154 / JCM 14090 / 6A8).